Reading from the N-terminus, the 342-residue chain is tRNA N6-adenosine threonylcarbamoyltransferase (342 aa).

The Fe cation site is built by histidine 111 and histidine 115. Substrate contacts are provided by residues 133–137 (AVSGG), aspartate 166, glycine 179, aspartate 183, and asparagine 272. Residue aspartate 300 participates in Fe cation binding.

Belongs to the KAE1 / TsaD family. Fe(2+) serves as cofactor.

It localises to the cytoplasm. The enzyme catalyses L-threonylcarbamoyladenylate + adenosine(37) in tRNA = N(6)-L-threonylcarbamoyladenosine(37) in tRNA + AMP + H(+). Functionally, required for the formation of a threonylcarbamoyl group on adenosine at position 37 (t(6)A37) in tRNAs that read codons beginning with adenine. Is involved in the transfer of the threonylcarbamoyl moiety of threonylcarbamoyl-AMP (TC-AMP) to the N6 group of A37, together with TsaE and TsaB. TsaD likely plays a direct catalytic role in this reaction. The protein is tRNA N6-adenosine threonylcarbamoyltransferase of Geobacter sp. (strain M21).